The sequence spans 378 residues: uncharacterized protein (378 aa).

It belongs to the IIV-6 329R family.

This is an uncharacterized protein from Acheta domesticus (House cricket).